A 359-amino-acid polypeptide reads, in one-letter code: Histidinol-phosphate aminotransferase (359 aa).

K217 carries the N6-(pyridoxal phosphate)lysine modification.

The protein belongs to the class-II pyridoxal-phosphate-dependent aminotransferase family. Histidinol-phosphate aminotransferase subfamily. As to quaternary structure, homodimer. Requires pyridoxal 5'-phosphate as cofactor.

The enzyme catalyses L-histidinol phosphate + 2-oxoglutarate = 3-(imidazol-4-yl)-2-oxopropyl phosphate + L-glutamate. The protein operates within amino-acid biosynthesis; L-histidine biosynthesis; L-histidine from 5-phospho-alpha-D-ribose 1-diphosphate: step 7/9. This chain is Histidinol-phosphate aminotransferase, found in Salmonella enteritidis PT4 (strain P125109).